Reading from the N-terminus, the 417-residue chain is Nucleosome assembly protein (417 aa).

A disordered region spans residues 1-47 (MSDPIRTKPKSSMQIDNAPTPHNTPASVLNPSYLKNGNPVRAQAQEQ). The segment covering 10 to 35 (KSSMQIDNAPTPHNTPASVLNPSYLK) has biased composition (polar residues). A phosphothreonine mark is found at T20 and T24. At S27 the chain carries Phosphoserine. K50 is covalently cross-linked (Glycyl lysine isopeptide (Lys-Gly) (interchain with G-Cter in ubiquitin)). T53 carries the phosphothreonine modification. 6 positions are modified to phosphoserine: S69, S76, S82, S98, S104, and S140. Residues 143 to 362 (EQPKPEQIAK…IPRAVDWFTG (220 aa)) form an interaction with NBA1 region. Phosphoserine; by CK2 occurs at positions 159 and 177. The segment at residues 330-356 (LEEDLEERLALDYSIGEQLKDKLIPRA) is a DNA-binding region (H-T-H motif). The disordered stretch occupies residues 364 to 417 (ALEFEFEEDEEEADEDEDEEEDDDHGLEDDDGESAEEQDDFAGRPEQAPECKQS). Positions 367 to 403 (FEFEEDEEEADEDEDEEEDDDHGLEDDDGESAEEQDD) are enriched in acidic residues. A Phosphoserine; by CK2 modification is found at S397. Over residues 404–417 (FAGRPEQAPECKQS) the composition is skewed to basic and acidic residues.

The protein belongs to the nucleosome assembly protein (NAP) family. As to quaternary structure, component of the GIN4 complex composed of at least BNI5, CDC3, CDC10, CDC11, CDC12, GIN4, NAP1 and SHS1 which forms a ring at the bud neck. Homodimer (in-vitro). Interacts with the B-type cyclin CLB2. Interacts with 60S ribosomal protein L18 (RPL18A or RPL18B), CKA2, CKI1, eukaryotic elongation factor 1 complex eEF1A (TEF1 or TEF2), FOL1, HSC82, HTA2, HTB2, HTZ1, KAP114, KCC4, NIS1, SSA1, SSA2, SSB1, SSC1, SHM1, SIP5 and TCO89. Interacts with NBA1. Interacts with histone H3/H4 heterodimers. Phosphorylation by CK2 is required for normal progression through S phase. CK2 phosphorylation is not required for correct bud formation nor histone binding.

The protein resides in the cytoplasm. The protein localises to the nucleus. It is found in the bud neck. Its function is as follows. Acidic protein, which assembles histones into an octamer (in vitro). Involved in the regulation of the localization and the function of the septins during mitosis. Involved in the function of B-type cyclins. The protein is Nucleosome assembly protein of Saccharomyces cerevisiae (strain ATCC 204508 / S288c) (Baker's yeast).